Here is a 288-residue protein sequence, read N- to C-terminus: DNA repair protein RecO (288 aa).

The protein belongs to the RecO family.

Functionally, involved in DNA repair and RecF pathway recombination. The sequence is that of DNA repair protein RecO from Trichodesmium erythraeum (strain IMS101).